Here is a 255-residue protein sequence, read N- to C-terminus: Pyrroloquinoline-quinone synthase (255 aa).

Belongs to the PqqC family.

It catalyses the reaction 6-(2-amino-2-carboxyethyl)-7,8-dioxo-1,2,3,4,7,8-hexahydroquinoline-2,4-dicarboxylate + 3 O2 = pyrroloquinoline quinone + 2 H2O2 + 2 H2O + H(+). Its pathway is cofactor biosynthesis; pyrroloquinoline quinone biosynthesis. In terms of biological role, ring cyclization and eight-electron oxidation of 3a-(2-amino-2-carboxyethyl)-4,5-dioxo-4,5,6,7,8,9-hexahydroquinoline-7,9-dicarboxylic-acid to PQQ. The protein is Pyrroloquinoline-quinone synthase of Cereibacter sphaeroides (strain KD131 / KCTC 12085) (Rhodobacter sphaeroides).